The following is a 129-amino-acid chain: Small ribosomal subunit protein uS11 (129 aa).

This sequence belongs to the universal ribosomal protein uS11 family. In terms of assembly, part of the 30S ribosomal subunit. Interacts with proteins S7 and S18. Binds to IF-3.

Located on the platform of the 30S subunit, it bridges several disparate RNA helices of the 16S rRNA. Forms part of the Shine-Dalgarno cleft in the 70S ribosome. The sequence is that of Small ribosomal subunit protein uS11 from Nitrosospira multiformis (strain ATCC 25196 / NCIMB 11849 / C 71).